The primary structure comprises 337 residues: Holliday junction branch migration complex subunit RuvB (337 aa).

The tract at residues methionine 1–tyrosine 179 is large ATPase domain (RuvB-L). ATP contacts are provided by residues leucine 18, arginine 19, glycine 60, lysine 63, threonine 64, serine 65, glutamate 126–phenylalanine 128, arginine 169, tyrosine 179, and arginine 216. A Mg(2+)-binding site is contributed by threonine 64. The interval serine 180–leucine 250 is small ATPAse domain (RuvB-S). Positions aspartate 253–glutamine 337 are head domain (RuvB-H). DNA is bound by residues lysine 308 and arginine 313.

Belongs to the RuvB family. As to quaternary structure, homohexamer. Forms an RuvA(8)-RuvB(12)-Holliday junction (HJ) complex. HJ DNA is sandwiched between 2 RuvA tetramers; dsDNA enters through RuvA and exits via RuvB. An RuvB hexamer assembles on each DNA strand where it exits the tetramer. Each RuvB hexamer is contacted by two RuvA subunits (via domain III) on 2 adjacent RuvB subunits; this complex drives branch migration. In the full resolvosome a probable DNA-RuvA(4)-RuvB(12)-RuvC(2) complex forms which resolves the HJ.

It localises to the cytoplasm. It carries out the reaction ATP + H2O = ADP + phosphate + H(+). Its function is as follows. The RuvA-RuvB-RuvC complex processes Holliday junction (HJ) DNA during genetic recombination and DNA repair, while the RuvA-RuvB complex plays an important role in the rescue of blocked DNA replication forks via replication fork reversal (RFR). RuvA specifically binds to HJ cruciform DNA, conferring on it an open structure. The RuvB hexamer acts as an ATP-dependent pump, pulling dsDNA into and through the RuvAB complex. RuvB forms 2 homohexamers on either side of HJ DNA bound by 1 or 2 RuvA tetramers; 4 subunits per hexamer contact DNA at a time. Coordinated motions by a converter formed by DNA-disengaged RuvB subunits stimulates ATP hydrolysis and nucleotide exchange. Immobilization of the converter enables RuvB to convert the ATP-contained energy into a lever motion, pulling 2 nucleotides of DNA out of the RuvA tetramer per ATP hydrolyzed, thus driving DNA branch migration. The RuvB motors rotate together with the DNA substrate, which together with the progressing nucleotide cycle form the mechanistic basis for DNA recombination by continuous HJ branch migration. Branch migration allows RuvC to scan DNA until it finds its consensus sequence, where it cleaves and resolves cruciform DNA. This chain is Holliday junction branch migration complex subunit RuvB, found in Chlamydia pneumoniae (Chlamydophila pneumoniae).